The following is a 62-amino-acid chain: Photosystem II reaction center protein Z (62 aa).

Helical transmembrane passes span 8–28 and 41–61; these read AIFALIATSSILLISVPVVFA and FSGTSLWIGLVFLVGILNSLI.

The protein belongs to the PsbZ family. PSII is composed of 1 copy each of membrane proteins PsbA, PsbB, PsbC, PsbD, PsbE, PsbF, PsbH, PsbI, PsbJ, PsbK, PsbL, PsbM, PsbT, PsbY, PsbZ, Psb30/Ycf12, at least 3 peripheral proteins of the oxygen-evolving complex and a large number of cofactors. It forms dimeric complexes.

The protein resides in the plastid. Its subcellular location is the chloroplast thylakoid membrane. May control the interaction of photosystem II (PSII) cores with the light-harvesting antenna, regulates electron flow through the 2 photosystem reaction centers. PSII is a light-driven water plastoquinone oxidoreductase, using light energy to abstract electrons from H(2)O, generating a proton gradient subsequently used for ATP formation. The protein is Photosystem II reaction center protein Z of Acorus gramineus (Dwarf sweet flag).